The primary structure comprises 209 residues: Na(+)-translocating NADH-quinone reductase subunit D (209 aa).

The next 5 membrane-spanning stretches (helical) occupy residues 42–62, 66–86, 103–123, 131–151, and 178–198; these read LVMT…ISLI, IPNS…VIVV, VFVG…AYAM, FMDG…VGFV, and NGLF…IWGL.

Belongs to the NqrDE/RnfAE family. In terms of assembly, composed of six subunits; NqrA, NqrB, NqrC, NqrD, NqrE and NqrF.

The protein resides in the cell inner membrane. It catalyses the reaction a ubiquinone + n Na(+)(in) + NADH + H(+) = a ubiquinol + n Na(+)(out) + NAD(+). In terms of biological role, NQR complex catalyzes the reduction of ubiquinone-1 to ubiquinol by two successive reactions, coupled with the transport of Na(+) ions from the cytoplasm to the periplasm. NqrA to NqrE are probably involved in the second step, the conversion of ubisemiquinone to ubiquinol. This Yersinia pseudotuberculosis serotype O:1b (strain IP 31758) protein is Na(+)-translocating NADH-quinone reductase subunit D.